The primary structure comprises 390 residues: GTPase Obg (390 aa).

Residues 1 to 159 form the Obg domain; it reads MKFVDEASIL…RDLLLELMLL (159 aa). A disordered region spans residues 127-147; that stretch reads NTRFKSSVNRTPRQKTNGTPG. A compositionally biased stretch (polar residues) spans 129-145; it reads RFKSSVNRTPRQKTNGT. The OBG-type G domain occupies 160–333; it reads ADVGMLGMPN…LCWDVMTFII (174 aa). Residues 166 to 173, 191 to 195, 213 to 216, 283 to 286, and 314 to 316 each bind GTP; these read GMPNAGKS, FTTLV, DIPG, NKID, and SAA. Mg(2+) is bound by residues Ser173 and Thr193.

The protein belongs to the TRAFAC class OBG-HflX-like GTPase superfamily. OBG GTPase family. Monomer. Mg(2+) serves as cofactor.

It is found in the cytoplasm. In terms of biological role, an essential GTPase which binds GTP, GDP and possibly (p)ppGpp with moderate affinity, with high nucleotide exchange rates and a fairly low GTP hydrolysis rate. Plays a role in control of the cell cycle, stress response, ribosome biogenesis and in those bacteria that undergo differentiation, in morphogenesis control. The chain is GTPase Obg from Salmonella paratyphi A (strain ATCC 9150 / SARB42).